The chain runs to 122 residues: Small ribosomal subunit protein uS13 (122 aa).

The tract at residues 95-122 (NLPVRGQRTHTNARTRKGKAKPIAGKKK) is disordered.

It belongs to the universal ribosomal protein uS13 family. Part of the 30S ribosomal subunit. Forms a loose heterodimer with protein S19. Forms two bridges to the 50S subunit in the 70S ribosome.

Functionally, located at the top of the head of the 30S subunit, it contacts several helices of the 16S rRNA. In the 70S ribosome it contacts the 23S rRNA (bridge B1a) and protein L5 of the 50S subunit (bridge B1b), connecting the 2 subunits; these bridges are implicated in subunit movement. Contacts the tRNAs in the A and P-sites. The protein is Small ribosomal subunit protein uS13 of Methylobacterium sp. (strain 4-46).